The primary structure comprises 251 residues: uncharacterized protein (251 aa).

12–21 contributes to the NADP(+) binding site; it reads TGASSQGDIG. Position 148 (S148) interacts with substrate. Catalysis depends on Y161, which acts as the Proton acceptor.

This sequence belongs to the short-chain dehydrogenases/reductases (SDR) family.

This is an uncharacterized protein from Bacillus subtilis (strain 168).